Here is a 112-residue protein sequence, read N- to C-terminus: Iron-sulfur cluster assembly protein CyaY (112 aa).

The protein belongs to the frataxin family.

In terms of biological role, involved in iron-sulfur (Fe-S) cluster assembly. May act as a regulator of Fe-S biogenesis. This Janthinobacterium sp. (strain Marseille) (Minibacterium massiliensis) protein is Iron-sulfur cluster assembly protein CyaY.